The following is a 293-amino-acid chain: Acetylglutamate kinase (293 aa).

Residues 70-71 (GG), Arg-92, and Asn-186 contribute to the substrate site.

This sequence belongs to the acetylglutamate kinase family. ArgB subfamily.

The protein localises to the cytoplasm. The catalysed reaction is N-acetyl-L-glutamate + ATP = N-acetyl-L-glutamyl 5-phosphate + ADP. Its pathway is amino-acid biosynthesis; L-arginine biosynthesis; N(2)-acetyl-L-ornithine from L-glutamate: step 2/4. Its function is as follows. Catalyzes the ATP-dependent phosphorylation of N-acetyl-L-glutamate. This is Acetylglutamate kinase from Parasynechococcus marenigrum (strain WH8102).